The sequence spans 288 residues: MSGLRALLGLGLPVAGSRLPRVRVQAGACRARPTWWGPQRLISGGRGDVEGMASSAVKYLSQEEAQAVDQELFNEYQFSVDQLMELAGLSCATAIAKVYPPTSLSRSPPTVLVICGPGNNGGDGLVCARHLKLFGYHPTIYYPKRPNKPLFTALVTQCQKMDIPFLDEMPSEPTLIDELYELVVDAIFGFSFKGEVREPFRSILSVLNGLTVPIASIDIPSGWDVERGNSGGIQPDLLISLTAPKKSAAQFTGRYHYLGGRFVPPALEKKYQLNLPPYPDTECVYRLQ.

The transit peptide at 1–59 directs the protein to the mitochondrion; the sequence is MSGLRALLGLGLPVAGSRLPRVRVQAGACRARPTWWGPQRLISGGRGDVEGMASSAVKY. The 211-residue stretch at 65-275 folds into the YjeF N-terminal domain; the sequence is AQAVDQELFN…ALEKKYQLNL (211 aa). Residue 119–123 participates in (6S)-NADPHX binding; it reads NNGGD. A K(+)-binding site is contributed by Asn-120. Lys-144 carries the N6-succinyllysine modification. Asp-185 is a binding site for K(+). (6S)-NADPHX contacts are provided by residues 189-195 and Asp-218; that span reads GFSFKGE. Ser-221 contributes to the K(+) binding site.

This sequence belongs to the NnrE/AIBP family. In terms of assembly, homodimer. Interacts with APOA1 and APOA2. The cofactor is K(+). In terms of processing, undergoes physiological phosphorylation during sperm capacitation, downstream to PKA activation.

Its subcellular location is the mitochondrion. The protein resides in the secreted. The enzyme catalyses (6R)-NADHX = (6S)-NADHX. It catalyses the reaction (6R)-NADPHX = (6S)-NADPHX. Its function is as follows. Catalyzes the epimerization of the S- and R-forms of NAD(P)HX, a damaged form of NAD(P)H that is a result of enzymatic or heat-dependent hydration. This is a prerequisite for the S-specific NAD(P)H-hydrate dehydratase to allow the repair of both epimers of NAD(P)HX. Accelerates cholesterol efflux from endothelial cells to high-density lipoprotein (HDL) and thereby regulates angiogenesis. The protein is NAD(P)H-hydrate epimerase of Sus scrofa (Pig).